The sequence spans 431 residues: Divergent protein kinase domain 1B (431 aa).

Over 1–30 (MRRLRRLVHLVLLCPFSKGLQGRLPGLRVK) the chain is Cytoplasmic. The May mediate ER retention motif lies at 5–6 (RR). The helical transmembrane segment at 31-51 (YVLLVWLGIFVGSWMVYVHYS) threads the bilayer. The Lumenal portion of the chain corresponds to 52-431 (SYSELCRGHV…WREISNTNYS (380 aa)). Cystine bridges form between Cys-57–Cys-94 and Cys-62–Cys-117.

This sequence belongs to the DIPK family. In terms of processing, among the many cysteines in the lumenal domain, most are probably involved in disulfide bonds.

The protein resides in the endoplasmic reticulum membrane. The chain is Divergent protein kinase domain 1B from Rattus norvegicus (Rat).